Consider the following 364-residue polypeptide: Histidinol-phosphate aminotransferase (364 aa).

The tract at residues 1–46 (MQPRDLSDHSPYVPGRGVEEVARDRGLDPDDLIKLSSNENPHGPSP) is disordered. The span at 17-33 (GVEEVARDRGLDPDDLI) shows a compositional bias: basic and acidic residues. An N6-(pyridoxal phosphate)lysine modification is found at K222.

Belongs to the class-II pyridoxal-phosphate-dependent aminotransferase family. Histidinol-phosphate aminotransferase subfamily. It depends on pyridoxal 5'-phosphate as a cofactor.

It catalyses the reaction L-histidinol phosphate + 2-oxoglutarate = 3-(imidazol-4-yl)-2-oxopropyl phosphate + L-glutamate. The protein operates within amino-acid biosynthesis; L-histidine biosynthesis; L-histidine from 5-phospho-alpha-D-ribose 1-diphosphate: step 7/9. The chain is Histidinol-phosphate aminotransferase from Halorubrum lacusprofundi (strain ATCC 49239 / DSM 5036 / JCM 8891 / ACAM 34).